A 247-amino-acid chain; its full sequence is tRNA uridine(34) hydroxylase (247 aa).

One can recognise a Rhodanese domain in the interval 123–217 (ITKQDVIVDT…YLEDTQNKNN (95 aa)). The active-site Cysteine persulfide intermediate is the Cys-177.

It belongs to the TrhO family.

The enzyme catalyses uridine(34) in tRNA + AH2 + O2 = 5-hydroxyuridine(34) in tRNA + A + H2O. Functionally, catalyzes oxygen-dependent 5-hydroxyuridine (ho5U) modification at position 34 in tRNAs. This Rickettsia bellii (strain RML369-C) protein is tRNA uridine(34) hydroxylase.